The chain runs to 650 residues: 1-deoxy-D-xylulose-5-phosphate synthase (650 aa).

Residues H73 and 114-116 (SHA) each bind thiamine diphosphate. A Mg(2+)-binding site is contributed by D145. Residues 146 to 147 (GA), N174, Y285, and E367 contribute to the thiamine diphosphate site. N174 is a binding site for Mg(2+). A disordered region spans residues 631–650 (MGDEVGADESNQTPAGGGQA).

It belongs to the transketolase family. DXPS subfamily. In terms of assembly, homodimer. Requires Mg(2+) as cofactor. Thiamine diphosphate is required as a cofactor.

The enzyme catalyses D-glyceraldehyde 3-phosphate + pyruvate + H(+) = 1-deoxy-D-xylulose 5-phosphate + CO2. It participates in metabolic intermediate biosynthesis; 1-deoxy-D-xylulose 5-phosphate biosynthesis; 1-deoxy-D-xylulose 5-phosphate from D-glyceraldehyde 3-phosphate and pyruvate: step 1/1. In terms of biological role, catalyzes the acyloin condensation reaction between C atoms 2 and 3 of pyruvate and glyceraldehyde 3-phosphate to yield 1-deoxy-D-xylulose-5-phosphate (DXP). This chain is 1-deoxy-D-xylulose-5-phosphate synthase, found in Parafrankia sp. (strain EAN1pec).